The sequence spans 298 residues: MNQEVKSGKVLSPSTPWTQRPVPGIEVADEQQTLKATFTEPTIECPECHALVTRTAISFNAYVCPQCDEHLRMKARDRLNWFFDNVVAELGQEFSAKDPLKFVDSKPYPDRMREAQTKTGETEALIAMQGNLNGVDMIACAFEFDFMAGSMGTVVGDRFVKAAELAIEKRQPLICFAASGGARMQEGMLSLMQMARTSAAIQKLKDTGLPYIVVLTHPVYGGVTASLAMLGDIHIAEPKAMIGFAGKRVIEQTVRETLEEPFQRAEYLLDHGVVDQIVHRHALRDTVSRLVSKLMNLP.

A disordered region spans residues 1-21 (MNQEVKSGKVLSPSTPWTQRP). The C4-type zinc-finger motif lies at 20–67 (RPVPGIEVADEQQTLKATFTEPTIECPECHALVTRTAISFNAYVCPQC). One can recognise a CoA carboxyltransferase N-terminal domain in the interval 41–298 (PTIECPECHA…RLVSKLMNLP (258 aa)). Zn(2+)-binding residues include Cys-45, Cys-48, Cys-64, and Cys-67.

The protein belongs to the AccD/PCCB family. As to quaternary structure, acetyl-CoA carboxylase is a heterohexamer composed of biotin carboxyl carrier protein (AccB), biotin carboxylase (AccC) and two subunits each of ACCase subunit alpha (AccA) and ACCase subunit beta (AccD). The cofactor is Zn(2+).

Its subcellular location is the cytoplasm. The catalysed reaction is N(6)-carboxybiotinyl-L-lysyl-[protein] + acetyl-CoA = N(6)-biotinyl-L-lysyl-[protein] + malonyl-CoA. It participates in lipid metabolism; malonyl-CoA biosynthesis; malonyl-CoA from acetyl-CoA: step 1/1. Component of the acetyl coenzyme A carboxylase (ACC) complex. Biotin carboxylase (BC) catalyzes the carboxylation of biotin on its carrier protein (BCCP) and then the CO(2) group is transferred by the transcarboxylase to acetyl-CoA to form malonyl-CoA. This Acinetobacter baumannii (strain SDF) protein is Acetyl-coenzyme A carboxylase carboxyl transferase subunit beta.